A 413-amino-acid polypeptide reads, in one-letter code: Histidine--tRNA ligase (413 aa).

It belongs to the class-II aminoacyl-tRNA synthetase family.

Its subcellular location is the cytoplasm. The catalysed reaction is tRNA(His) + L-histidine + ATP = L-histidyl-tRNA(His) + AMP + diphosphate + H(+). This is Histidine--tRNA ligase from Methanosarcina acetivorans (strain ATCC 35395 / DSM 2834 / JCM 12185 / C2A).